The chain runs to 230 residues: Large ribosomal subunit protein uL1 (230 aa).

The protein belongs to the universal ribosomal protein uL1 family. As to quaternary structure, part of the 50S ribosomal subunit.

Its function is as follows. Binds directly to 23S rRNA. The L1 stalk is quite mobile in the ribosome, and is involved in E site tRNA release. Protein L1 is also a translational repressor protein, it controls the translation of the L11 operon by binding to its mRNA. This is Large ribosomal subunit protein uL1 from Sulfurimonas denitrificans (strain ATCC 33889 / DSM 1251) (Thiomicrospira denitrificans (strain ATCC 33889 / DSM 1251)).